A 104-amino-acid polypeptide reads, in one-letter code: Cytochrome c oxidase assembly factor 6 (104 aa).

Positions 1–22 are disordered; the sequence is MGLFSFDGGKKESQPPNTRSQR. Positions 22 to 76 constitute a CHCH domain; that stretch reads RKLCWESRDAFFQCLDKADILDAMDPKNSKSIKSHCKVENEKFEENCAHSWIKYF. The Cx9C motif signature appears at 25–35; that stretch reads CWESRDAFFQC. 2 cysteine pairs are disulfide-bonded: cysteine 25/cysteine 68 and cysteine 35/cysteine 57. The Cx10C motif motif lies at 57 to 68; that stretch reads CKVENEKFEENC.

It belongs to the cytochrome c oxidase subunit 6B family. Interacts with COX2.

The protein resides in the cytoplasm. Its subcellular location is the nucleus. The protein localises to the mitochondrion intermembrane space. In terms of biological role, involved in the maturation of the mitochondrial respiratory chain complex IV subunit MT-CO2/COX2. Thereby, may regulate early steps of complex IV assembly. Mitochondrial respiratory chain complex IV or cytochrome c oxidase is the component of the respiratory chain that catalyzes the transfer of electrons from intermembrane space cytochrome c to molecular oxygen in the matrix and as a consequence contributes to the proton gradient involved in mitochondrial ATP synthesis. May also be required for efficient formation of respiratory supercomplexes comprised of complexes III and IV. This chain is Cytochrome c oxidase assembly factor 6, found in Saccharomyces cerevisiae (strain ATCC 204508 / S288c) (Baker's yeast).